The sequence spans 95 residues: MGLRYSKEVRERHGDKDLEGRVPMTLNLPQGLYGRFNCKSCWFANRGLIACSDHYLCLNCLTRLRSQSQFCGICGKPLPTKIRFEESPSAPPYEP.

Gly2 carries N-myristoyl glycine; by host lipidation. The RING-type; atypical zinc-finger motif lies at 38–74 (CKSCWFANRGLIACSDHYLCLNCLTRLRSQSQFCGIC). The PTAP/PSAP motif signature appears at 88-91 (PSAP).

This sequence belongs to the arenaviridae Z protein family. As to quaternary structure, interacts with protein NP; this interaction probably directs the encapsidated genome to budding sites. Interacts (via RING domain) with polymerase L; this interaction inhibits viral transcription and replication, Z partially blocks the product exit tunnel for the releasing nascent RNA product. Interacts with the glycoprotein complex; this interaction plays a role in virion budding. Interacts with host eIF4E; this interaction results in eIF4E reduced affinity for its substrate, the 5'-m7 G cap structure. Interacts (via late-budding domain) with host TSG101; this interaction is essential for budding and release of viral particles. Interacts with host RPLP0; this interaction may serve to load ribosome-like particles inside the virion. Interacts with host PML; this interaction induces PML bodies redistribution in the cytoplasm upon viral infection. Myristoylation is required for the role of RING finger protein Z in assembly and budding.

It is found in the virion. The protein localises to the host cytoplasm. The protein resides in the host perinuclear region. It localises to the host cell membrane. In terms of biological role, plays a crucial role in virion assembly and budding. Expressed late in the virus life cycle, it acts as an inhibitor of viral transcription and RNA synthesis by interacting with the viral polymerase L. Presumably recruits the NP encapsidated genome to cellular membranes at budding sites via direct interaction with NP. Plays critical roles in the final steps of viral release by interacting with host TSG101, a member of the vacuolar protein-sorting pathway and using other cellular host proteins involved in vesicle formation pathway. The budding of the virus progeny occurs after association of protein Z with the viral glycoprotein complex SSP-GP1-GP2 at the cell periphery, step that requires myristoylation of protein Z. Also selectively represses protein production by associating with host eIF4E. In cell-based minigenome assay, has an inhibitory effect on the ribonucleoprotein machinery (vRNP), which is responsible for the replication and transcription of the viral genome. This chain is RING finger protein Z, found in Pirital mammarenavirus (isolate Rat/Venezuela/VAV-488/1995) (PIRV).